The chain runs to 47 residues: Antimicrobial peptide LCI (47 aa).

Its subcellular location is the secreted. Has antibacterial activity against X.oryzae pv oryzae and R.solanacearum, but not E.coli or P.carotovorum subsp carotovorum. May bind DNA or mRNA. The sequence is that of Antimicrobial peptide LCI from Bacillus subtilis.